The primary structure comprises 209 residues: Probable GTP-binding protein EngB (209 aa).

In terms of domain architecture, EngB-type G spans 12–203 (VSFEIIFVGR…RDRLHEMKRD (192 aa)). GTP is bound by residues 20–27 (GRSNVGKS), 45–49 (GVTLR), 62–65 (DMPG), 142–145 (NKMD), and 179–181 (ISA). Mg(2+) is bound by residues Ser27 and Thr47.

It belongs to the TRAFAC class TrmE-Era-EngA-EngB-Septin-like GTPase superfamily. EngB GTPase family. Requires Mg(2+) as cofactor.

Necessary for normal cell division and for the maintenance of normal septation. The polypeptide is Probable GTP-binding protein EngB (Methanosarcina barkeri (strain Fusaro / DSM 804)).